Reading from the N-terminus, the 364-residue chain is Alanine racemase (364 aa).

The active-site Proton acceptor; specific for D-alanine is Lys-35. The residue at position 35 (Lys-35) is an N6-(pyridoxal phosphate)lysine. Position 130 (Arg-130) interacts with substrate. Tyr-256 serves as the catalytic Proton acceptor; specific for L-alanine. A substrate-binding site is contributed by Met-304.

Belongs to the alanine racemase family. The cofactor is pyridoxal 5'-phosphate.

The catalysed reaction is L-alanine = D-alanine. The protein operates within amino-acid biosynthesis; D-alanine biosynthesis; D-alanine from L-alanine: step 1/1. Functionally, catalyzes the interconversion of L-alanine and D-alanine. May also act on other amino acids. This is Alanine racemase (alr) from Polaromonas sp. (strain JS666 / ATCC BAA-500).